The following is a 167-amino-acid chain: Inclusion membrane protein G (167 aa).

Transmembrane regions (helical) follow at residues 37-57 (LSLF…AVLF) and 63-83 (VLPY…AVIV). Disordered stretches follow at residues 97–136 (KRSP…STFG) and 148–167 (VSGA…SHSF). Residues 122–134 (ESASPQASPTSST) are compositionally biased toward low complexity. The short motif at 161-166 (RSRSHS) is the Phosphorylation-dependent binding motif element. Position 166 is a phosphoserine (serine 166).

In terms of processing, phosphorylated by chlamydial kinase Pnk1.

The protein localises to the secreted. The protein resides in the host vacuole. Its subcellular location is the host pathogen-containing vacuole. It localises to the host pathogen-containing vacuole membrane. Its function is as follows. Inclusion membrane protein probably involved in early modification events of the chlamydial inclusion. Binds to the host cell 14-3-3 beta (YWHAB); phosphorylation of Ser-166 is probably required. This chain is Inclusion membrane protein G (incG), found in Chlamydia trachomatis serovar D (strain ATCC VR-885 / DSM 19411 / UW-3/Cx).